A 304-amino-acid chain; its full sequence is MSTNNTTTNNEDLISSLYPPPPPYYKFFTKDNLQKLSTWQENNQTTTVSSEVKLEEENTDPDSNNSEENSIPPGELRFLIPPKQPEGPQYRGYGNIWLFEDKLPNLKDSQWEQLYNTSTSTFTSTSTSTANTNIITNTDTDINGNQEVDAGDSTGDENLTSETKIKELHKLMDSLLLNFLELIGILSIDPIKYDKKIHDINLILININHLLNTYRPHQSRESLIMLLKNQIDYKFLEIDQINKKCLDIKSKIKNLINERITVVSDGTTTNTTTTTKTTGLGDGDSIDEKEQLKQDIINRLLSSI.

2 disordered regions span residues 42–85 and 137–158; these read NNQT…PKQP and NTDT…GDEN.

It belongs to the Mediator complex subunit 7 family. In terms of assembly, component of the Mediator complex.

Its subcellular location is the nucleus. In terms of biological role, component of the Mediator complex, a coactivator involved in the regulated transcription of nearly all RNA polymerase II-dependent genes. Mediator functions as a bridge to convey information from gene-specific regulatory proteins to the basal RNA polymerase II transcription machinery. Mediator is recruited to promoters by direct interactions with regulatory proteins and serves as a scaffold for the assembly of a functional preinitiation complex with RNA polymerase II and the general transcription factors. The sequence is that of Mediator of RNA polymerase II transcription subunit 7 (MED7) from Candida albicans (strain SC5314 / ATCC MYA-2876) (Yeast).